Reading from the N-terminus, the 238-residue chain is Ribonuclease PH (238 aa).

Residues Arg-86 and Gly-124–Arg-126 contribute to the phosphate site.

The protein belongs to the RNase PH family. Homohexameric ring arranged as a trimer of dimers.

The enzyme catalyses tRNA(n+1) + phosphate = tRNA(n) + a ribonucleoside 5'-diphosphate. Phosphorolytic 3'-5' exoribonuclease that plays an important role in tRNA 3'-end maturation. Removes nucleotide residues following the 3'-CCA terminus of tRNAs; can also add nucleotides to the ends of RNA molecules by using nucleoside diphosphates as substrates, but this may not be physiologically important. Probably plays a role in initiation of 16S rRNA degradation (leading to ribosome degradation) during starvation. The chain is Ribonuclease PH from Haemophilus influenzae (strain PittGG).